A 640-amino-acid chain; its full sequence is ATP-dependent rRNA helicase spb4 (640 aa).

A Q motif motif is present at residues 14–42 (WDAVTPALSEWVLEAMSSMGFTRMTPVQA). The region spanning 45–249 (IPLFMAHKDV…RVGLRNPVKV (205 aa)) is the Helicase ATP-binding domain. 58–65 (AVTGSGKT) lines the ATP pocket. The DEAD box motif lies at 197-200 (DEAD). Residues 283-437 (ALKRILSSVQ…LITFSDADAA (155 aa)) enclose the Helicase C-terminal domain. Positions 521 to 629 (AYKDKQREKR…AAKAAGAKAD (109 aa)) form a coiled coil. Disordered stretches follow at residues 531 to 595 (RKEL…EKQK) and 607 to 640 (RKKN…QGFD). Basic residues predominate over residues 568 to 582 (KKLKRREQKKSKHEK). Over residues 583 to 595 (ARWEKMTEEEKQK) the composition is skewed to basic and acidic residues. Over residues 630 to 640 (GDDEEEFQGFD) the composition is skewed to acidic residues.

It belongs to the DEAD box helicase family. DDX55/SPB4 subfamily. Component of pre-60S ribosomal complexes.

It is found in the nucleus. Its subcellular location is the nucleolus. The catalysed reaction is ATP + H2O = ADP + phosphate + H(+). In terms of biological role, ATP-binding RNA helicase involved in the biogenesis of 60S ribosomal subunits. Binds 90S pre-ribosomal particles and dissociates from pre-60S ribosomal particles after processing of 27SB pre-rRNA. Required for the normal formation of 18S rRNA through the processing of pre-rRNAs at sites A0, A1 and A2, and the normal formation of 25S and 5.8S rRNAs through the processing of pre-rRNAs at sites C1 and C2. This Neosartorya fischeri (strain ATCC 1020 / DSM 3700 / CBS 544.65 / FGSC A1164 / JCM 1740 / NRRL 181 / WB 181) (Aspergillus fischerianus) protein is ATP-dependent rRNA helicase spb4.